A 404-amino-acid chain; its full sequence is Tryptophan synthase beta chain (404 aa).

Residue K98 is modified to N6-(pyridoxal phosphate)lysine.

The protein belongs to the TrpB family. In terms of assembly, tetramer of two alpha and two beta chains. It depends on pyridoxal 5'-phosphate as a cofactor.

The enzyme catalyses (1S,2R)-1-C-(indol-3-yl)glycerol 3-phosphate + L-serine = D-glyceraldehyde 3-phosphate + L-tryptophan + H2O. The protein operates within amino-acid biosynthesis; L-tryptophan biosynthesis; L-tryptophan from chorismate: step 5/5. In terms of biological role, the beta subunit is responsible for the synthesis of L-tryptophan from indole and L-serine. In Rhodopseudomonas palustris (strain ATCC BAA-98 / CGA009), this protein is Tryptophan synthase beta chain.